Reading from the N-terminus, the 611-residue chain is Glutamine--fructose-6-phosphate aminotransferase [isomerizing] (611 aa).

Catalysis depends on Cys-2, which acts as the Nucleophile; for GATase activity. In terms of domain architecture, Glutamine amidotransferase type-2 spans Cys-2–Gln-219. 2 consecutive SIS domains span residues Ala-287–Ala-427 and Trp-460–Pro-601. Catalysis depends on Lys-606, which acts as the For Fru-6P isomerization activity.

As to quaternary structure, homodimer.

The protein resides in the cytoplasm. The enzyme catalyses D-fructose 6-phosphate + L-glutamine = D-glucosamine 6-phosphate + L-glutamate. In terms of biological role, catalyzes the first step in hexosamine metabolism, converting fructose-6P into glucosamine-6P using glutamine as a nitrogen source. This Acidithiobacillus ferridurans protein is Glutamine--fructose-6-phosphate aminotransferase [isomerizing].